The chain runs to 488 residues: Pup--protein ligase (488 aa).

Residue Glu33 participates in Mg(2+) binding. Residue Arg76 participates in ATP binding. Tyr78 is a binding site for Mg(2+). Asp80 acts as the Proton acceptor in catalysis. Mg(2+) is bound at residue Glu86. Residues Thr89 and Trp453 each contribute to the ATP site.

The protein belongs to the Pup ligase/Pup deamidase family. Pup-conjugating enzyme subfamily.

The enzyme catalyses ATP + [prokaryotic ubiquitin-like protein]-L-glutamate + [protein]-L-lysine = ADP + phosphate + N(6)-([prokaryotic ubiquitin-like protein]-gamma-L-glutamyl)-[protein]-L-lysine.. It participates in protein degradation; proteasomal Pup-dependent pathway. Its pathway is protein modification; protein pupylation. Catalyzes the covalent attachment of the prokaryotic ubiquitin-like protein modifier Pup to the proteasomal substrate proteins, thereby targeting them for proteasomal degradation. This tagging system is termed pupylation. The ligation reaction involves the side-chain carboxylate of the C-terminal glutamate of Pup and the side-chain amino group of a substrate lysine. The polypeptide is Pup--protein ligase (Bifidobacterium adolescentis (strain ATCC 15703 / DSM 20083 / NCTC 11814 / E194a)).